The following is a 427-amino-acid chain: Adenylosuccinate synthetase (427 aa).

Residues 12–18 (GDEGKGK) and 40–42 (GHT) contribute to the GTP site. The Proton acceptor role is filled by D13. Mg(2+) contacts are provided by D13 and G40. Residues 13–16 (DEGK), 38–41 (NAGH), T128, R142, Q223, T238, and R302 each bind IMP. H41 functions as the Proton donor in the catalytic mechanism. 298–304 (TTTGRPR) contributes to the substrate binding site. Residues R304, 330–332 (SID), and 412–414 (SVG) contribute to the GTP site.

Belongs to the adenylosuccinate synthetase family. Homodimer. Requires Mg(2+) as cofactor.

The protein localises to the cytoplasm. The enzyme catalyses IMP + L-aspartate + GTP = N(6)-(1,2-dicarboxyethyl)-AMP + GDP + phosphate + 2 H(+). The protein operates within purine metabolism; AMP biosynthesis via de novo pathway; AMP from IMP: step 1/2. Its function is as follows. Plays an important role in the de novo pathway of purine nucleotide biosynthesis. Catalyzes the first committed step in the biosynthesis of AMP from IMP. This is Adenylosuccinate synthetase from Staphylococcus epidermidis (strain ATCC 35984 / DSM 28319 / BCRC 17069 / CCUG 31568 / BM 3577 / RP62A).